Here is a 201-residue protein sequence, read N- to C-terminus: NAD(P)H dehydrogenase (quinone) (201 aa).

Residues 7 to 192 form the Flavodoxin-like domain; the sequence is ILVLYYSMYG…SIARYQGEYV (186 aa). Residues 13-18 and 81-83 contribute to the FMN site; these read SMYGHI and TRF. An NAD(+)-binding site is contributed by Y15. W101 provides a ligand contact to substrate. Residues 116–121 and H136 contribute to the FMN site; that span reads STGTGG.

It belongs to the WrbA family. The cofactor is FMN.

The enzyme catalyses a quinone + NADH + H(+) = a quinol + NAD(+). It carries out the reaction a quinone + NADPH + H(+) = a quinol + NADP(+). The polypeptide is NAD(P)H dehydrogenase (quinone) (Shigella sonnei (strain Ss046)).